Reading from the N-terminus, the 158-residue chain is C-type lectin (158 aa).

The first 23 residues, 1–23, serve as a signal peptide directing secretion; that stretch reads MWQFTVVSLGWLAVFLSLSGAKG. Intrachain disulfides connect C26/C37, C54/C154, and C129/C146. In terms of domain architecture, C-type lectin spans 33–155; the sequence is RNGVCNKLFP…CASLHPFICQ (123 aa). The Mannose-binding motif lies at 119–121; that stretch reads EPN. Residues E127, N142, and D143 each coordinate Ca(2+).

The protein belongs to the true venom lectin family. In terms of tissue distribution, expressed by the venom gland.

It localises to the secreted. Functionally, mannose-binding lectin which recognizes specific carbohydrate structures and agglutinates a variety of animal cells by binding to cell-surface glycoproteins and glycolipids. May be a calcium-dependent lectin. The sequence is that of C-type lectin from Cerberus rynchops (Dog-faced water snake).